A 492-amino-acid chain; its full sequence is Zinc finger protein GLIS2 (492 aa).

The segment at 49-101 (VITPICSSPPPGFRYRDGDSPPFSSPPIVDLSLSPPSGTDSPSRSSLSPDRAA) is disordered. Positions 69–129 (PPFSSPPIVD…SPFQFFLPLG (61 aa)) are transcription activation. A compositionally biased stretch (low complexity) spans 82–97 (SPPSGTDSPSRSSLSP). The interval 138 to 161 (MFMSPPKENRLSLEFTEQKQLVCQ) is transcription repression. The C2H2-type 1 zinc-finger motif lies at 158 to 183 (LVCQWAKCNRLFELLQELVDHVNDFH). The C2H2-type 2; degenerate zinc finger occupies 192–219 (YCCHWEGCARRGRGFNARYKMLIHIRTH). 3 consecutive C2H2-type zinc fingers follow at residues 225-247 (HCCPTCHKSFSRLENLKIHNRSH), 253-277 (YMCPYEGCNKRYSNSSDRFKHTRTH), and 283-307 (YYCKMPGCQKRYTDPSSLRKHIKAH). Residues 423–444 (VENEKRPKGQRGDSSERTDGSK) are compositionally biased toward basic and acidic residues. The interval 423 to 450 (VENEKRPKGQRGDSSERTDGSKLRPGSI) is disordered.

It belongs to the GLI C2H2-type zinc-finger protein family.

It is found in the nucleus speckle. The protein resides in the cytoplasm. In terms of biological role, can act either as a transcription repressor or as a transcription activator, depending on the cell context. May be involved in neuron differentiation. In Xenopus laevis (African clawed frog), this protein is Zinc finger protein GLIS2 (glis2).